Here is a 200-residue protein sequence, read N- to C-terminus: 3-isopropylmalate dehydratase small subunit (200 aa).

This sequence belongs to the LeuD family. LeuD type 1 subfamily. In terms of assembly, heterodimer of LeuC and LeuD.

The catalysed reaction is (2R,3S)-3-isopropylmalate = (2S)-2-isopropylmalate. Its pathway is amino-acid biosynthesis; L-leucine biosynthesis; L-leucine from 3-methyl-2-oxobutanoate: step 2/4. Its function is as follows. Catalyzes the isomerization between 2-isopropylmalate and 3-isopropylmalate, via the formation of 2-isopropylmaleate. This chain is 3-isopropylmalate dehydratase small subunit, found in Actinobacillus pleuropneumoniae serotype 7 (strain AP76).